A 355-amino-acid chain; its full sequence is Protein pelota homolog (355 aa).

Belongs to the eukaryotic release factor 1 family. Pelota subfamily. Monomer. A divalent metal cation serves as cofactor.

It is found in the cytoplasm. Its function is as follows. May function in recognizing stalled ribosomes, interact with stem-loop structures in stalled mRNA molecules, and effect endonucleolytic cleavage of the mRNA. May play a role in the release non-functional ribosomes and degradation of damaged mRNAs. Has endoribonuclease activity. This chain is Protein pelota homolog, found in Halorubrum lacusprofundi (strain ATCC 49239 / DSM 5036 / JCM 8891 / ACAM 34).